The sequence spans 395 residues: G-protein coupled receptor 182 (395 aa).

The Extracellular segment spans residues M1–F53. N-linked (GlcNAc...) asparagine glycosylation is found at N24 and N33. The chain crosses the membrane as a helical span at residues V54–C75. The Cytoplasmic portion of the chain corresponds to R76–L86. Residues Y87 to V109 traverse the membrane as a helical segment. At M110–R123 the chain is on the extracellular side. An intrachain disulfide couples C122 to C198. A helical transmembrane segment spans residues F124 to I145. The Cytoplasmic portion of the chain corresponds to D146–R166. The helical transmembrane segment at R167–Q189 threads the bilayer. The Extracellular portion of the chain corresponds to L190–A213. A helical transmembrane segment spans residues V214 to I235. Residues L236 to L254 lie on the Cytoplasmic side of the membrane. Residues L255–L276 form a helical membrane-spanning segment. Residues L277 to Y295 lie on the Extracellular side of the membrane. The helical transmembrane segment at F296–Y316 threads the bilayer. The Cytoplasmic portion of the chain corresponds to N317–P395. Phosphoserine is present on S329.

The protein belongs to the G-protein coupled receptor 1 family. Expressed in a wide variety of peripheral tissues in the adult rat with prominent expression in lung, testis, adrenal and liver.

It is found in the cell membrane. In terms of biological role, orphan receptor. This is G-protein coupled receptor 182 (Gpr182) from Rattus norvegicus (Rat).